Reading from the N-terminus, the 473-residue chain is FAD-dependent urate hydroxylase (473 aa).

The protein belongs to the HpyO family. As to quaternary structure, homodimer. It depends on FAD as a cofactor.

The catalysed reaction is urate + NADH + O2 + H(+) = 5-hydroxyisourate + NAD(+) + H2O. It catalyses the reaction urate + NADPH + O2 + H(+) = 5-hydroxyisourate + NADP(+) + H2O. It functions in the pathway purine metabolism; urate degradation. Its function is as follows. Catalyzes the hydroxylation of urate to 5-hydroxyisourate (HIU). Is likely to be involved in the urate degradation pathway to allantoin. Is slightly more efficient (about 2.6 times) with NADPH than NADH as the electron donor. The protein is FAD-dependent urate hydroxylase of Xanthomonas campestris pv. campestris (strain ATCC 33913 / DSM 3586 / NCPPB 528 / LMG 568 / P 25).